Consider the following 479-residue polypeptide: Ribulose bisphosphate carboxylase large chain (479 aa).

A propeptide spanning residues 1–2 is cleaved from the precursor; that stretch reads MS. P3 carries the post-translational modification N-acetylproline. Position 14 is an N6,N6,N6-trimethyllysine (K14). Substrate-binding residues include N123 and T173. K175 acts as the Proton acceptor in catalysis. Position 177 (K177) interacts with substrate. The Mg(2+) site is built by K201, D203, and E204. K201 bears the N6-carboxylysine mark. The Proton acceptor role is filled by H294. R295, H327, and S379 together coordinate substrate.

This sequence belongs to the RuBisCO large chain family. Type I subfamily. Heterohexadecamer of 8 large chains and 8 small chains; disulfide-linked. The disulfide link is formed within the large subunit homodimers. Mg(2+) serves as cofactor. Post-translationally, the disulfide bond which can form in the large chain dimeric partners within the hexadecamer appears to be associated with oxidative stress and protein turnover.

Its subcellular location is the plastid. The protein localises to the chloroplast. The enzyme catalyses 2 (2R)-3-phosphoglycerate + 2 H(+) = D-ribulose 1,5-bisphosphate + CO2 + H2O. It catalyses the reaction D-ribulose 1,5-bisphosphate + O2 = 2-phosphoglycolate + (2R)-3-phosphoglycerate + 2 H(+). In terms of biological role, ruBisCO catalyzes two reactions: the carboxylation of D-ribulose 1,5-bisphosphate, the primary event in carbon dioxide fixation, as well as the oxidative fragmentation of the pentose substrate in the photorespiration process. Both reactions occur simultaneously and in competition at the same active site. The sequence is that of Ribulose bisphosphate carboxylase large chain from Ananas comosus (Pineapple).